A 501-amino-acid polypeptide reads, in one-letter code: Capsid protein (501 aa).

Residues 78 to 98 are disordered; it reads SEEGFPVEPKTEEKDIPSTSG. The short motif at 122–125 is the Nuclear localization signal element; sequence KRGF. The CCHC-type zinc-finger motif lies at 431–448; sequence CKCWICHEEGHYANECPK.

It belongs to the caulimoviridae capsid protein family. As to quaternary structure, interacts (via nuclear localization signal) with host importin alpha.

It is found in the virion. The protein resides in the host nucleus. Its function is as follows. Self assembles to form an icosahedral capsid, about 50 nm in diameter, nm, composed of 420 subunits of the viral capsid protein. The capsid encapsulates the genomic dsDNA. Following virus entry into host cell, provides nuclear import of the viral genome. Virus particles do not enter the nucleus, but dock at the nuclear membrane through the interaction with host importins. The sequence is that of Capsid protein from Cestrum parqui (CmYLCV).